A 106-amino-acid chain; its full sequence is U1-lycotoxin-Ls1z (106 aa).

A signal peptide spans 1-19; sequence MKVLVVVALLVTLISYSSS. The propeptide occupies 20 to 40; it reads EGIDDLEADELLSLMANEQTR. 4 disulfide bridges follow: Cys-43-Cys-58, Cys-50-Cys-67, Cys-57-Cys-85, and Cys-69-Cys-83.

The protein belongs to the neurotoxin 19 (CSTX) family. 03 subfamily. In terms of tissue distribution, expressed by the venom gland.

The protein resides in the secreted. The polypeptide is U1-lycotoxin-Ls1z (Lycosa singoriensis (Wolf spider)).